Consider the following 266-residue polypeptide: Type III pantothenate kinase (266 aa).

ATP is bound at residue 9–16 (DAGNSRIK). Residues tyrosine 96 and 103-106 (GSDR) contribute to the substrate site. Residue aspartate 105 is the Proton acceptor of the active site. Residue threonine 129 participates in ATP binding. Threonine 189 provides a ligand contact to substrate.

The protein belongs to the type III pantothenate kinase family. In terms of assembly, homodimer. NH4(+) is required as a cofactor. K(+) serves as cofactor.

It localises to the cytoplasm. The enzyme catalyses (R)-pantothenate + ATP = (R)-4'-phosphopantothenate + ADP + H(+). It participates in cofactor biosynthesis; coenzyme A biosynthesis; CoA from (R)-pantothenate: step 1/5. In terms of biological role, catalyzes the phosphorylation of pantothenate (Pan), the first step in CoA biosynthesis. In Burkholderia cenocepacia (strain ATCC BAA-245 / DSM 16553 / LMG 16656 / NCTC 13227 / J2315 / CF5610) (Burkholderia cepacia (strain J2315)), this protein is Type III pantothenate kinase.